Reading from the N-terminus, the 427-residue chain is Peptidase B (427 aa).

Mn(2+) is bound by residues K195 and D200. K207 is a catalytic residue. Positions 218, 277, and 279 each coordinate Mn(2+). R281 is an active-site residue.

This sequence belongs to the peptidase M17 family. As to quaternary structure, homohexamer. Mn(2+) serves as cofactor.

It localises to the cytoplasm. The catalysed reaction is Release of an N-terminal amino acid, Xaa, from a peptide or arylamide. Xaa is preferably Glu or Asp but may be other amino acids, including Leu, Met, His, Cys and Gln.. Functionally, probably plays an important role in intracellular peptide degradation. This is Peptidase B from Escherichia coli (strain ATCC 8739 / DSM 1576 / NBRC 3972 / NCIMB 8545 / WDCM 00012 / Crooks).